The sequence spans 548 residues: Fluconazole resistance protein 1 (548 aa).

The segment at 30-94 is disordered; the sequence is SAREDETRKP…WNGPSDPENP (65 aa). The segment covering 31 to 51 has biased composition (basic and acidic residues); that stretch reads AREDETRKPENTDKKECKPDY. Residues 60 to 73 are compositionally biased toward low complexity; sequence SCSESSTDSDSSGS. 12 helical membrane-spanning segments follow: residues 104–124, 139–159, 179–199, 203–223, 230–250, 261–281, 347–367, 376–396, 416–436, 440–460, 476–496, and 511–531; these read LVVF…SIYT, VVAT…PIIF, FFFM…GLIV, ISGI…ADII, LVLG…PLLG, FIFW…AFFF, IAVA…VFVG, VGLA…LFGI, FLIV…LFGW, VHWI…FNIF, ASVF…FPLF, and VAWG…IPFI.

This sequence belongs to the major facilitator superfamily.

It is found in the membrane. Probable efflux transporter. Confers resistance to the azole derivative fluconazole (FCZ). The protein is Fluconazole resistance protein 1 (FLR1) of Saccharomyces cerevisiae (strain ATCC 204508 / S288c) (Baker's yeast).